Reading from the N-terminus, the 158-residue chain is Cyclic pyranopterin monophosphate synthase (158 aa).

Residues 74-76 (MCH) and 112-113 (ME) each bind substrate. Residue Asp-127 is part of the active site.

The protein belongs to the MoaC family. Homohexamer; trimer of dimers.

It carries out the reaction (8S)-3',8-cyclo-7,8-dihydroguanosine 5'-triphosphate = cyclic pyranopterin phosphate + diphosphate. It participates in cofactor biosynthesis; molybdopterin biosynthesis. Catalyzes the conversion of (8S)-3',8-cyclo-7,8-dihydroguanosine 5'-triphosphate to cyclic pyranopterin monophosphate (cPMP). The sequence is that of Cyclic pyranopterin monophosphate synthase from Helicobacter pylori (strain P12).